The primary structure comprises 858 residues: DNA mismatch repair protein MutS (858 aa).

600–607 (GPNMSGKS) contributes to the ATP binding site.

The protein belongs to the DNA mismatch repair MutS family.

Its function is as follows. This protein is involved in the repair of mismatches in DNA. It is possible that it carries out the mismatch recognition step. This protein has a weak ATPase activity. This chain is DNA mismatch repair protein MutS, found in Bacillus pumilus (strain SAFR-032).